We begin with the raw amino-acid sequence, 222 residues long: ATP synthase F(0) complex subunit a (222 aa).

6 consecutive transmembrane segments (helical) span residues Phe8–Pro28, Trp64–Leu84, Gln93–Phe113, Gln127–Ile147, Ile160–Ile180, and Ile197–His219.

It belongs to the ATPase A chain family. Component of the ATP synthase complex composed at least of ATP5F1A/subunit alpha, ATP5F1B/subunit beta, ATP5MC1/subunit c (homooctomer), MT-ATP6/subunit a, MT-ATP8/subunit 8, ATP5ME/subunit e, ATP5MF/subunit f, ATP5MG/subunit g, ATP5MK/subunit k, ATP5MJ/subunit j, ATP5F1C/subunit gamma, ATP5F1D/subunit delta, ATP5F1E/subunit epsilon, ATP5PF/subunit F6, ATP5PB/subunit b, ATP5PD/subunit d, ATP5PO/subunit OSCP. ATP synthase complex consists of a soluble F(1) head domain (subunits alpha(3) and beta(3)) - the catalytic core - and a membrane F(0) domain - the membrane proton channel (subunits c, a, 8, e, f, g, k and j). These two domains are linked by a central stalk (subunits gamma, delta, and epsilon) rotating inside the F1 region and a stationary peripheral stalk (subunits F6, b, d, and OSCP). Interacts with DNAJC30; interaction is direct.

The protein resides in the mitochondrion inner membrane. It carries out the reaction H(+)(in) = H(+)(out). Functionally, subunit a, of the mitochondrial membrane ATP synthase complex (F(1)F(0) ATP synthase or Complex V) that produces ATP from ADP in the presence of a proton gradient across the membrane which is generated by electron transport complexes of the respiratory chain. ATP synthase complex consist of a soluble F(1) head domain - the catalytic core - and a membrane F(1) domain - the membrane proton channel. These two domains are linked by a central stalk rotating inside the F(1) region and a stationary peripheral stalk. During catalysis, ATP synthesis in the catalytic domain of F(1) is coupled via a rotary mechanism of the central stalk subunits to proton translocation. With the subunit c (ATP5MC1), forms the proton-conducting channel in the F(0) domain, that contains two crucial half-channels (inlet and outlet) that facilitate proton movement from the mitochondrial intermembrane space (IMS) into the matrix. Protons are taken up via the inlet half-channel and released through the outlet half-channel, following a Grotthuss mechanism. The protein is ATP synthase F(0) complex subunit a of Loxodonta africana (African elephant).